The primary structure comprises 338 residues: Beta-ketoacyl-[acyl-carrier-protein] synthase III 2 (338 aa).

Active-site residues include cysteine 119 and histidine 255. Residues 256–260 (QANIR) are ACP-binding. Asparagine 285 is an active-site residue.

It belongs to the thiolase-like superfamily. FabH family. Homodimer.

Its subcellular location is the cytoplasm. The enzyme catalyses malonyl-[ACP] + acetyl-CoA + H(+) = 3-oxobutanoyl-[ACP] + CO2 + CoA. It participates in lipid metabolism; fatty acid biosynthesis. Functionally, catalyzes the condensation reaction of fatty acid synthesis by the addition to an acyl acceptor of two carbons from malonyl-ACP. Catalyzes the first condensation reaction which initiates fatty acid synthesis and may therefore play a role in governing the total rate of fatty acid production. Possesses both acetoacetyl-ACP synthase and acetyl transacylase activities. Its substrate specificity determines the biosynthesis of branched-chain and/or straight-chain of fatty acids. This chain is Beta-ketoacyl-[acyl-carrier-protein] synthase III 2, found in Deinococcus radiodurans (strain ATCC 13939 / DSM 20539 / JCM 16871 / CCUG 27074 / LMG 4051 / NBRC 15346 / NCIMB 9279 / VKM B-1422 / R1).